Reading from the N-terminus, the 393-residue chain is 4-hydroxyphenylpyruvate dioxygenase (393 aa).

Thr-2 is modified (N-acetylthreonine). VOC domains follow at residues 18–149 (HFHS…LVEK) and 180–338 (IIDH…IFTK). Lys-132 bears the N6-succinyllysine mark. Residue His-183 participates in Fe cation binding. 3 positions are modified to phosphoserine: Ser-211, Ser-226, and Ser-250. Fe cation contacts are provided by His-266 and Glu-349.

Belongs to the 4HPPD family. In terms of assembly, homodimer. Fe cation serves as cofactor.

It is found in the cytoplasm. Its subcellular location is the endoplasmic reticulum membrane. The protein localises to the golgi apparatus membrane. It carries out the reaction 3-(4-hydroxyphenyl)pyruvate + O2 = homogentisate + CO2. It functions in the pathway amino-acid degradation; L-phenylalanine degradation; acetoacetate and fumarate from L-phenylalanine: step 3/6. In terms of biological role, catalyzes the conversion of 4-hydroxyphenylpyruvic acid to homogentisic acid, one of the steps in tyrosine catabolism. This chain is 4-hydroxyphenylpyruvate dioxygenase (Hpd), found in Mus musculus (Mouse).